The following is a 315-amino-acid chain: Alpha- and gamma-adaptin-binding protein p34 (315 aa).

Residues 197–233 (IGSADPCHPEQPHLPAADRTESLSDHRGGASNTTDAQ) form a disordered region. Residues 203–224 (CHPEQPHLPAADRTESLSDHRG) show a composition bias toward basic and acidic residues. Phosphoserine occurs at positions 310 and 311.

Associated with AP-1 and AP-2 complexes.

It localises to the cytoplasm. Its subcellular location is the cytosol. In terms of biological role, may be involved in endocytic recycling of growth factor receptors such as EGFR. The sequence is that of Alpha- and gamma-adaptin-binding protein p34 (AAGAB) from Pongo abelii (Sumatran orangutan).